We begin with the raw amino-acid sequence, 491 residues long: Putative pentatricopeptide repeat-containing protein At1g02420 (491 aa).

PPR repeat units follow at residues 179–209 (DTACFNALLRTLCQEKSMTDARNVYHSLKHQ), 210–244 (FQPDLQTFNILLSGWKSSEEAEAFFEEMKGKGLKP), 245–279 (DVVTYNSLIDVYCKDREIEKAYKLIDKMREEEETP), 280–314 (DVITYTTVIGGLGLIGQPDKAREVLKEMKEYGCYP), 315–349 (DVAAYNAAIRNFCIARRLGDADKLVDEMVKKGLSP), 350–384 (NATTYNLFFRVLSLANDLGRSWELYVRMLGNECLP), 385–419 (NTQSCMFLIKMFKRHEKVDMAMRLWEDMVVKGFGS), and 420–454 (YSLVSDVLLDLLCDLAKVEEAEKCLLEMVEKGHRP).

This sequence belongs to the PPR family. P subfamily.

This chain is Putative pentatricopeptide repeat-containing protein At1g02420, found in Arabidopsis thaliana (Mouse-ear cress).